Consider the following 232-residue polypeptide: MSIVNSVRAQIPPIHREGYPFVGGFALVTLILFWIWSPLGWIGTVLTIWCAYFFRNPARTTPVRDGLVVSPADGRVSMVVDIIPPPELGLGAKPLPRVSIFMSVFNCHVNRSPVAGRIERIVYSPGKFINAELDKASEDNERNSMVLSTEHGQIGVIQIAGLIARRIVSFVREGQPLVAGERFGLIRFGSRLDVYLPEGTKPLVAEGQTAIAGETILADLKGGDAGRIYRTD.

Serine 190 acts as the Schiff-base intermediate with substrate; via pyruvic acid in catalysis. Serine 190 carries the pyruvic acid (Ser); by autocatalysis modification.

This sequence belongs to the phosphatidylserine decarboxylase family. PSD-A subfamily. In terms of assembly, heterodimer of a large membrane-associated beta subunit and a small pyruvoyl-containing alpha subunit. Pyruvate is required as a cofactor. Is synthesized initially as an inactive proenzyme. Formation of the active enzyme involves a self-maturation process in which the active site pyruvoyl group is generated from an internal serine residue via an autocatalytic post-translational modification. Two non-identical subunits are generated from the proenzyme in this reaction, and the pyruvate is formed at the N-terminus of the alpha chain, which is derived from the carboxyl end of the proenzyme. The post-translation cleavage follows an unusual pathway, termed non-hydrolytic serinolysis, in which the side chain hydroxyl group of the serine supplies its oxygen atom to form the C-terminus of the beta chain, while the remainder of the serine residue undergoes an oxidative deamination to produce ammonia and the pyruvoyl prosthetic group on the alpha chain.

The protein resides in the cell membrane. The enzyme catalyses a 1,2-diacyl-sn-glycero-3-phospho-L-serine + H(+) = a 1,2-diacyl-sn-glycero-3-phosphoethanolamine + CO2. It participates in phospholipid metabolism; phosphatidylethanolamine biosynthesis; phosphatidylethanolamine from CDP-diacylglycerol: step 2/2. Its function is as follows. Catalyzes the formation of phosphatidylethanolamine (PtdEtn) from phosphatidylserine (PtdSer). The sequence is that of Phosphatidylserine decarboxylase proenzyme from Rhodopseudomonas palustris (strain TIE-1).